Reading from the N-terminus, the 197-residue chain is MSEFQKLVIIDAKGHLMGRLASTVAKQLLAGQKVVVVRCEELNISGHFFRNKLKYLAYLRKACRYNPSRGAFHFRAPSRIFTKAVRGMLPHKTTRGNIALKNLQALEGIPPPFDKQKRLVVPAALRVLRLKPSRKYCTIGRLSSEVGWKYKNIVSKLEERRKIKSAAFYQAKSANQKHINVAKTKSSVNEKLAVFGY.

Belongs to the universal ribosomal protein uL13 family. In terms of assembly, component of the large ribosomal subunit (LSU). Mature yeast ribosomes consist of a small (40S) and a large (60S) subunit. The 40S small subunit contains 1 molecule of ribosomal RNA (18S rRNA) and at least 33 different proteins. The large 60S subunit contains 3 rRNA molecules (25S, 5.8S and 5S rRNA) and at least 46 different proteins.

It is found in the cytoplasm. Its subcellular location is the nucleus. It localises to the nucleolus. Component of the ribosome, a large ribonucleoprotein complex responsible for the synthesis of proteins in the cell. The small ribosomal subunit (SSU) binds messenger RNAs (mRNAs) and translates the encoded message by selecting cognate aminoacyl-transfer RNA (tRNA) molecules. The large subunit (LSU) contains the ribosomal catalytic site termed the peptidyl transferase center (PTC), which catalyzes the formation of peptide bonds, thereby polymerizing the amino acids delivered by tRNAs into a polypeptide chain. The nascent polypeptides leave the ribosome through a tunnel in the LSU and interact with protein factors that function in enzymatic processing, targeting, and the membrane insertion of nascent chains at the exit of the ribosomal tunnel. This chain is Large ribosomal subunit protein uL13C (rpl1603), found in Schizosaccharomyces pombe (strain 972 / ATCC 24843) (Fission yeast).